The sequence spans 311 residues: MSDKSYQPTIAGLRAFVAVVEKGHFSAAASFLGVRQSTLSQALAALESGLGVQLIERSTRRVFVTTQGRHLLPRAQAAIEAMDAFTAAAAGESDPLRGGMRLGLIPTVAPYVLPTMLTGLTHRLPTLTLRVVEDQTEHLLTALREGALDAAMIALPVETAGIAEIPIYDEDFVLALPPGHPLSGKRRVPTTALAQLPLLLLDEGHCLRDQTLDICRKSGVQAELANTRAASLATAVQCVTGGLGVTLLPQSAAPVESVRSKLGLAQFAAPCPGRRIGLAFRSASGRSASYRQIAKIIGELISTEHHVRLVA.

Residues 8–65 (PTIAGLRAFVAVVEKGHFSAAASFLGVRQSTLSQALAALESGLGVQLIERSTRRVFVT) form the HTH lysR-type domain. The segment at residues 25–44 (FSAAASFLGVRQSTLSQALA) is a DNA-binding region (H-T-H motif).

The protein belongs to the LysR transcriptional regulatory family.

Required for the induction the katG gene for catalase. Involved in the response to hydrogen peroxide. This chain is Probable hydrogen peroxide-inducible genes activator (oxyR), found in Mycobacterium leprae (strain TN).